Reading from the N-terminus, the 235-residue chain is Uridylate kinase (235 aa).

Residue 10-11 (GS) coordinates ATP. Gly-45 contacts UMP. ATP contacts are provided by Gly-46 and Arg-50. UMP-binding positions include Asp-67 and 115–121 (VTPGQTT). Positions 141, 147, and 150 each coordinate ATP.

The protein belongs to the UMP kinase family. As to quaternary structure, homohexamer.

It localises to the cytoplasm. The catalysed reaction is UMP + ATP = UDP + ADP. The protein operates within pyrimidine metabolism; CTP biosynthesis via de novo pathway; UDP from UMP (UMPK route): step 1/1. With respect to regulation, inhibited by UTP. Catalyzes the reversible phosphorylation of UMP to UDP. This Methanocorpusculum labreanum (strain ATCC 43576 / DSM 4855 / Z) protein is Uridylate kinase.